Reading from the N-terminus, the 445-residue chain is tRNA modification GTPase MnmE (445 aa).

Positions 20, 79, and 119 each coordinate (6S)-5-formyl-5,6,7,8-tetrahydrofolate. The 157-residue stretch at 215–371 (GLKLAIIGPP…ILKNIEEIAE (157 aa)) folds into the TrmE-type G domain. Asparagine 225 is a K(+) binding site. Residues 225–230 (NAGKSS), 244–250 (SNIAGTT), and 269–272 (DTAG) contribute to the GTP site. Serine 229 contacts Mg(2+). Residues serine 244, isoleucine 246, and threonine 249 each contribute to the K(+) site. Threonine 250 contacts Mg(2+). Lysine 445 lines the (6S)-5-formyl-5,6,7,8-tetrahydrofolate pocket.

Belongs to the TRAFAC class TrmE-Era-EngA-EngB-Septin-like GTPase superfamily. TrmE GTPase family. As to quaternary structure, homodimer. Heterotetramer of two MnmE and two MnmG subunits. K(+) serves as cofactor.

It is found in the cytoplasm. Functionally, exhibits a very high intrinsic GTPase hydrolysis rate. Involved in the addition of a carboxymethylaminomethyl (cmnm) group at the wobble position (U34) of certain tRNAs, forming tRNA-cmnm(5)s(2)U34. The protein is tRNA modification GTPase MnmE of Rickettsia bellii (strain RML369-C).